The sequence spans 379 residues: Cytochrome b (379 aa).

The next 4 membrane-spanning stretches (helical) occupy residues F33 to M53, W77 to V98, W113 to L133, and F178 to L198. Residues H83 and H97 each coordinate heme b. Residues H182 and H196 each contribute to the heme b site. H201 contacts a ubiquinone. The next 4 helical transmembrane spans lie at T226–F246, L288–N308, I320–G340, and F347–P367.

It belongs to the cytochrome b family. As to quaternary structure, the cytochrome bc1 complex contains 11 subunits: 3 respiratory subunits (MT-CYB, CYC1 and UQCRFS1), 2 core proteins (UQCRC1 and UQCRC2) and 6 low-molecular weight proteins (UQCRH/QCR6, UQCRB/QCR7, UQCRQ/QCR8, UQCR10/QCR9, UQCR11/QCR10 and a cleavage product of UQCRFS1). This cytochrome bc1 complex then forms a dimer. Heme b serves as cofactor.

The protein localises to the mitochondrion inner membrane. In terms of biological role, component of the ubiquinol-cytochrome c reductase complex (complex III or cytochrome b-c1 complex) that is part of the mitochondrial respiratory chain. The b-c1 complex mediates electron transfer from ubiquinol to cytochrome c. Contributes to the generation of a proton gradient across the mitochondrial membrane that is then used for ATP synthesis. This chain is Cytochrome b (MT-CYB), found in Akodon spegazzinii (Spegazzini's grass mouse).